We begin with the raw amino-acid sequence, 222 residues long: UPF0173 metal-dependent hydrolase Kcr_0055 (222 aa).

The protein belongs to the UPF0173 family.

This chain is UPF0173 metal-dependent hydrolase Kcr_0055, found in Korarchaeum cryptofilum (strain OPF8).